The chain runs to 195 residues: Protein GrpE (195 aa).

Over residues 1–20 (MSSKEQKTPDEQVLDQKEAA) the composition is skewed to basic and acidic residues. Positions 1–40 (MSSKEQKTPDEQVLDQKEAAKGQQADAAPETADVADPRDE) are disordered.

Belongs to the GrpE family. In terms of assembly, homodimer.

Its subcellular location is the cytoplasm. In terms of biological role, participates actively in the response to hyperosmotic and heat shock by preventing the aggregation of stress-denatured proteins, in association with DnaK and GrpE. It is the nucleotide exchange factor for DnaK and may function as a thermosensor. Unfolded proteins bind initially to DnaJ; upon interaction with the DnaJ-bound protein, DnaK hydrolyzes its bound ATP, resulting in the formation of a stable complex. GrpE releases ADP from DnaK; ATP binding to DnaK triggers the release of the substrate protein, thus completing the reaction cycle. Several rounds of ATP-dependent interactions between DnaJ, DnaK and GrpE are required for fully efficient folding. The protein is Protein GrpE of Pectobacterium atrosepticum (strain SCRI 1043 / ATCC BAA-672) (Erwinia carotovora subsp. atroseptica).